Consider the following 257-residue polypeptide: uncharacterized protein (257 aa).

This is an uncharacterized protein from Dictyostelium discoideum (Social amoeba).